The chain runs to 425 residues: Serine--tRNA ligase (425 aa).

230–232 (TAE) is a binding site for L-serine. 261 to 263 (RSE) serves as a coordination point for ATP. E284 lines the L-serine pocket. Residue 348-351 (EISS) participates in ATP binding. S384 is a binding site for L-serine.

This sequence belongs to the class-II aminoacyl-tRNA synthetase family. Type-1 seryl-tRNA synthetase subfamily. Homodimer. The tRNA molecule binds across the dimer.

The protein resides in the cytoplasm. It carries out the reaction tRNA(Ser) + L-serine + ATP = L-seryl-tRNA(Ser) + AMP + diphosphate + H(+). The enzyme catalyses tRNA(Sec) + L-serine + ATP = L-seryl-tRNA(Sec) + AMP + diphosphate + H(+). The protein operates within aminoacyl-tRNA biosynthesis; selenocysteinyl-tRNA(Sec) biosynthesis; L-seryl-tRNA(Sec) from L-serine and tRNA(Sec): step 1/1. Functionally, catalyzes the attachment of serine to tRNA(Ser). Is also able to aminoacylate tRNA(Sec) with serine, to form the misacylated tRNA L-seryl-tRNA(Sec), which will be further converted into selenocysteinyl-tRNA(Sec). In Streptococcus pyogenes serotype M12 (strain MGAS2096), this protein is Serine--tRNA ligase.